The following is a 203-amino-acid chain: dATP triphosphohydrolase (203 aa).

Arg17 contacts dATP. The Co(2+) site is built by His31, His73, Asp74, Glu77, Asp82, and Asp130.

The protein belongs to the Caudovirales dATP triphosphohydrolase family. Co(2+) is required as a cofactor.

The catalysed reaction is dATP + H2O = 2'-deoxyadenosine + triphosphate + H(+). It catalyses the reaction dADP + H2O = 2'-deoxyadenosine + diphosphate. The enzyme catalyses dAMP + H2O = 2'-deoxyadenosine + phosphate. Catalyzes the hydrolysis of dATP, dADP and dAMP into dA. This step is essential for Z-genome synthesis (containing aminoadenine instead of adenine). Specifically removes dATP and its precursor dADP from the nucleotide pool of the host, preventing the incorporation of A into the phage genome and favoring the integration of the Z-base into the viral genome. In Acinetobacter phage SH-Ab 15497, this protein is dATP triphosphohydrolase (datZ).